The following is a 405-amino-acid chain: Secreted aspartic protease FUS4 (405 aa).

Positions 1-24 (MLAIATLHVALQVFGAFSLSHAAA) are cleaved as a signal peptide. The Peptidase A1 domain maps to 49-400 (YLFNVTVGSP…NFEERSFGLA (352 aa)). Residues Asn-52, Asn-61, Asn-107, and Asn-123 are each glycosylated (N-linked (GlcNAc...) asparagine). Cys-318 and Cys-356 are oxidised to a cystine.

Belongs to the peptidase A1 family.

It localises to the secreted. In terms of biological role, secreted aspartic protease; part of the gene cluster that mediates the biosynthesis of the mycotoxin fusarin C. Within the cluster, FUS1, FUS2, FUS8 and FUS9 are sufficient for fusarin production. The other FUS cluster members are not essential for fusarin C biosynthesis. This chain is Secreted aspartic protease FUS4, found in Gibberella fujikuroi (strain CBS 195.34 / IMI 58289 / NRRL A-6831) (Bakanae and foot rot disease fungus).